The sequence spans 483 residues: Bromoperoxidase-catalase (483 aa).

A disordered region spans residues 1–24 (MTQGPLTTEAGAPVADNQNSETAG). Active-site residues include H54 and N127. Residue Y337 participates in heme binding.

Belongs to the catalase family.

It catalyses the reaction 2 H2O2 = O2 + 2 H2O. The sequence is that of Bromoperoxidase-catalase (bca) from Streptomyces venezuelae (strain ATCC 10712 / CBS 650.69 / DSM 40230 / JCM 4526 / NBRC 13096 / PD 04745).